We begin with the raw amino-acid sequence, 693 residues long: Golgin subfamily A member 6D (693 aa).

Positions 14–611 form a coiled coil; it reads LEESRQNKLA…KLLELQELVL (598 aa). Disordered stretches follow at residues 20 to 70, 497 to 547, and 662 to 693; these read NKLA…GDSQ, LPGE…GTEQ, and VEPA…MQDT. Basic and acidic residues predominate over residues 537–547; sequence LPKEKADGTEQ. The segment covering 674–693 has biased composition (polar residues); that stretch reads PHNNPTVQQIVQLSPVMQDT.

This sequence belongs to the GOLGA6 family.

The protein is Golgin subfamily A member 6D (GOLGA6D) of Homo sapiens (Human).